A 244-amino-acid polypeptide reads, in one-letter code: Small ribosomal subunit protein eS4 (244 aa).

Residues Leu43–Glu106 form the S4 RNA-binding domain.

It belongs to the eukaryotic ribosomal protein eS4 family.

This Methanococcus maripaludis (strain C7 / ATCC BAA-1331) protein is Small ribosomal subunit protein eS4.